Consider the following 890-residue polypeptide: Alanine--tRNA ligase (890 aa).

Zn(2+)-binding residues include His567, His571, Cys680, and His684.

Belongs to the class-II aminoacyl-tRNA synthetase family. It depends on Zn(2+) as a cofactor.

The protein resides in the cytoplasm. The enzyme catalyses tRNA(Ala) + L-alanine + ATP = L-alanyl-tRNA(Ala) + AMP + diphosphate. Its function is as follows. Catalyzes the attachment of alanine to tRNA(Ala) in a two-step reaction: alanine is first activated by ATP to form Ala-AMP and then transferred to the acceptor end of tRNA(Ala). Also edits incorrectly charged Ser-tRNA(Ala) and Gly-tRNA(Ala) via its editing domain. The polypeptide is Alanine--tRNA ligase (Ruegeria pomeroyi (strain ATCC 700808 / DSM 15171 / DSS-3) (Silicibacter pomeroyi)).